The primary structure comprises 878 residues: Alanine--tRNA ligase (878 aa).

Positions 562, 566, 670, and 674 each coordinate Zn(2+).

This sequence belongs to the class-II aminoacyl-tRNA synthetase family. The cofactor is Zn(2+).

The protein resides in the cytoplasm. The enzyme catalyses tRNA(Ala) + L-alanine + ATP = L-alanyl-tRNA(Ala) + AMP + diphosphate. In terms of biological role, catalyzes the attachment of alanine to tRNA(Ala) in a two-step reaction: alanine is first activated by ATP to form Ala-AMP and then transferred to the acceptor end of tRNA(Ala). Also edits incorrectly charged Ser-tRNA(Ala) and Gly-tRNA(Ala) via its editing domain. This chain is Alanine--tRNA ligase, found in Acinetobacter baumannii (strain ACICU).